Consider the following 140-residue polypeptide: Large ribosomal subunit protein uL11 (140 aa).

It belongs to the universal ribosomal protein uL11 family. As to quaternary structure, part of the ribosomal stalk of the 50S ribosomal subunit. Interacts with L10 and the large rRNA to form the base of the stalk. L10 forms an elongated spine to which L12 dimers bind in a sequential fashion forming a multimeric L10(L12)X complex. In terms of processing, one or more lysine residues are methylated.

In terms of biological role, forms part of the ribosomal stalk which helps the ribosome interact with GTP-bound translation factors. This chain is Large ribosomal subunit protein uL11, found in Gemmatimonas aurantiaca (strain DSM 14586 / JCM 11422 / NBRC 100505 / T-27).